The following is a 219-amino-acid chain: Cytochrome c biogenesis ATP-binding export protein CcmA (219 aa).

An ABC transporter domain is found at 10–218 (ISAVNLTCIR…TLDYSYDSAV (209 aa)). 42-49 (GPNGSGKT) lines the ATP pocket.

Belongs to the ABC transporter superfamily. CcmA exporter (TC 3.A.1.107) family. As to quaternary structure, the complex is composed of two ATP-binding proteins (CcmA) and two transmembrane proteins (CcmB).

The protein localises to the cell inner membrane. The catalysed reaction is heme b(in) + ATP + H2O = heme b(out) + ADP + phosphate + H(+). In terms of biological role, part of the ABC transporter complex CcmAB involved in the biogenesis of c-type cytochromes; once thought to export heme, this seems not to be the case, but its exact role is uncertain. Responsible for energy coupling to the transport system. The chain is Cytochrome c biogenesis ATP-binding export protein CcmA from Colwellia psychrerythraea (strain 34H / ATCC BAA-681) (Vibrio psychroerythus).